The sequence spans 567 residues: Proline--tRNA ligase (567 aa).

The protein belongs to the class-II aminoacyl-tRNA synthetase family. ProS type 1 subfamily. As to quaternary structure, homodimer.

It is found in the cytoplasm. It carries out the reaction tRNA(Pro) + L-proline + ATP = L-prolyl-tRNA(Pro) + AMP + diphosphate. In terms of biological role, catalyzes the attachment of proline to tRNA(Pro) in a two-step reaction: proline is first activated by ATP to form Pro-AMP and then transferred to the acceptor end of tRNA(Pro). As ProRS can inadvertently accommodate and process non-cognate amino acids such as alanine and cysteine, to avoid such errors it has two additional distinct editing activities against alanine. One activity is designated as 'pretransfer' editing and involves the tRNA(Pro)-independent hydrolysis of activated Ala-AMP. The other activity is designated 'posttransfer' editing and involves deacylation of mischarged Ala-tRNA(Pro). The misacylated Cys-tRNA(Pro) is not edited by ProRS. In Staphylococcus aureus (strain COL), this protein is Proline--tRNA ligase.